We begin with the raw amino-acid sequence, 644 residues long: ATP-dependent zinc metalloprotease FtsH (644 aa).

The Cytoplasmic portion of the chain corresponds to 1 to 13 (MANNDNKHRRSMS). The chain crosses the membrane as a helical span at residues 14-34 (MLLYIAVAIFVYLLLSNTLLP). Topologically, residues 35–117 (GLLRQQIQTV…SIPDNSANML (83 aa)) are extracellular. A helical membrane pass occupies residues 118-138 (MYALIQYGIPLIIFLGIGFFI). The Cytoplasmic segment spans residues 139 to 644 (NRSLKRAMGD…DEGSSTPSEE (506 aa)). 224–231 (GPPGTGKT) contacts ATP. His445 serves as a coordination point for Zn(2+). Glu446 is a catalytic residue. Zn(2+)-binding residues include His449 and Asp522.

The protein in the central section; belongs to the AAA ATPase family. This sequence in the C-terminal section; belongs to the peptidase M41 family. As to quaternary structure, homohexamer. It depends on Zn(2+) as a cofactor.

The protein resides in the cell membrane. Functionally, acts as a processive, ATP-dependent zinc metallopeptidase for both cytoplasmic and membrane proteins. Plays a role in the quality control of integral membrane proteins. In Lancefieldella parvula (strain ATCC 33793 / DSM 20469 / CCUG 32760 / JCM 10300 / KCTC 3663 / VPI 0546 / 1246) (Atopobium parvulum), this protein is ATP-dependent zinc metalloprotease FtsH.